The primary structure comprises 362 residues: Chorismate synthase (362 aa).

2 residues coordinate NADP(+): Arg-48 and Arg-54. Residues Arg-125–Ser-127, Asn-241–Ala-242, Gly-286, Lys-301–Ser-305, and Arg-327 contribute to the FMN site.

This sequence belongs to the chorismate synthase family. As to quaternary structure, homotetramer. Requires FMNH2 as cofactor.

The enzyme catalyses 5-O-(1-carboxyvinyl)-3-phosphoshikimate = chorismate + phosphate. Its pathway is metabolic intermediate biosynthesis; chorismate biosynthesis; chorismate from D-erythrose 4-phosphate and phosphoenolpyruvate: step 7/7. Functionally, catalyzes the anti-1,4-elimination of the C-3 phosphate and the C-6 proR hydrogen from 5-enolpyruvylshikimate-3-phosphate (EPSP) to yield chorismate, which is the branch point compound that serves as the starting substrate for the three terminal pathways of aromatic amino acid biosynthesis. This reaction introduces a second double bond into the aromatic ring system. In Paramagnetospirillum magneticum (strain ATCC 700264 / AMB-1) (Magnetospirillum magneticum), this protein is Chorismate synthase.